Consider the following 105-residue polypeptide: Large ribosomal subunit protein bL21 (105 aa).

The protein belongs to the bacterial ribosomal protein bL21 family. In terms of assembly, part of the 50S ribosomal subunit. Contacts protein L20.

This protein binds to 23S rRNA in the presence of protein L20. This chain is Large ribosomal subunit protein bL21, found in Parafrankia sp. (strain EAN1pec).